Reading from the N-terminus, the 325-residue chain is Glutarate 2-hydroxylase (325 aa).

Fe cation is bound by residues His160, Asp162, and His292.

Belongs to the glutarate hydroxylase family. As to quaternary structure, homotetramer. Fe(2+) is required as a cofactor.

The enzyme catalyses glutarate + 2-oxoglutarate + O2 = (S)-2-hydroxyglutarate + succinate + CO2. Its pathway is amino-acid degradation. Functionally, acts as an alpha-ketoglutarate-dependent dioxygenase catalyzing hydroxylation of glutarate (GA) to L-2-hydroxyglutarate (L2HG). Functions in a L-lysine degradation pathway that proceeds via cadaverine, glutarate and L-2-hydroxyglutarate. This Escherichia coli (strain K12 / MC4100 / BW2952) protein is Glutarate 2-hydroxylase.